Reading from the N-terminus, the 413-residue chain is MSFVRNISDYFNKIDNLCYNQSWESGDKIAKYLSLNDDHSKEAYLHISEYGSTSRRCRVSEDEIIDEIVCLHLHVLHSVHVAKDLISSQSTQIRIIQLFNKEILQKRKDENWFLPIFYRLCTDLRWLSKGAESCASGDDEGDSNANSFFESAAKAITECYRTCVSDVHAEEGKTKKVAMLNMTNQLFQIYFQINKLNLLKPLIRAIDNCGPLYNKFLMADKVAYNYFLGRKALFDGDLILAEKGLVYAFRNCPTESVSNKRKILVYLIPVKMFLGHMPTASLLHRYRLDEFQEVVAAVKDGHLGRVDNALLTNGEFFIKCGIYLVLEKLRTITYRNLFKKVSQMVGKVQIPLDAFQAALRFVGVTDVDMDELECIIANLIAEKKVKGYLAHQHQKLVISKTNAFPTLSSVSSN.

The PCI domain occupies 222–403 (VAYNYFLGRK…QKLVISKTNA (182 aa)).

This sequence belongs to the CSN12 family.

This chain is PCI domain-containing protein 2 homolog, found in Caenorhabditis briggsae.